Here is a 395-residue protein sequence, read N- to C-terminus: Altered inheritance of mitochondria protein 39, mitochondrial (395 aa).

A helical transmembrane segment spans residues 156 to 176 (QIWSAIFGGIFGVILGYSLIY).

The protein belongs to the AIM39 family.

It is found in the mitochondrion membrane. The chain is Altered inheritance of mitochondria protein 39, mitochondrial (AIM39) from Saccharomyces cerevisiae (strain JAY291) (Baker's yeast).